We begin with the raw amino-acid sequence, 217 residues long: 3,4-dihydroxy-2-butanone 4-phosphate synthase (217 aa).

D-ribulose 5-phosphate is bound by residues 37–38, aspartate 42, 150–154, and glutamate 174; these read RE and RGGHT. Residue glutamate 38 participates in Mg(2+) binding. Histidine 153 serves as a coordination point for Mg(2+).

It belongs to the DHBP synthase family. As to quaternary structure, homodimer. Mg(2+) is required as a cofactor. Mn(2+) serves as cofactor.

It catalyses the reaction D-ribulose 5-phosphate = (2S)-2-hydroxy-3-oxobutyl phosphate + formate + H(+). It functions in the pathway cofactor biosynthesis; riboflavin biosynthesis; 2-hydroxy-3-oxobutyl phosphate from D-ribulose 5-phosphate: step 1/1. Its function is as follows. Catalyzes the conversion of D-ribulose 5-phosphate to formate and 3,4-dihydroxy-2-butanone 4-phosphate. The chain is 3,4-dihydroxy-2-butanone 4-phosphate synthase from Cronobacter sakazakii (strain ATCC BAA-894) (Enterobacter sakazakii).